The primary structure comprises 322 residues: Undecaprenyl-phosphate 4-deoxy-4-formamido-L-arabinose transferase (322 aa).

Residues 1–235 are Cytoplasmic-facing; it reads MFEIHPVKKV…TCLTTTPLRM (235 aa). A helical transmembrane segment spans residues 236–256; the sequence is LSLLGSIIAIGGFSIAVLLVI. The Periplasmic segment spans residues 257-269; it reads LRLTFGPQWAAEG. Residues 270–290 form a helical membrane-spanning segment; sequence VFMLFAVLFTFIGAQFIGMGL. The Cytoplasmic portion of the chain corresponds to 291-322; it reads LGEYIGRIYTDVRARPRYFVQQVIRPSSKENE.

The protein belongs to the glycosyltransferase 2 family.

The protein resides in the cell inner membrane. The catalysed reaction is UDP-4-deoxy-4-formamido-beta-L-arabinose + di-trans,octa-cis-undecaprenyl phosphate = 4-deoxy-4-formamido-alpha-L-arabinopyranosyl di-trans,octa-cis-undecaprenyl phosphate + UDP. It functions in the pathway glycolipid biosynthesis; 4-amino-4-deoxy-alpha-L-arabinose undecaprenyl phosphate biosynthesis; 4-amino-4-deoxy-alpha-L-arabinose undecaprenyl phosphate from UDP-4-deoxy-4-formamido-beta-L-arabinose and undecaprenyl phosphate: step 1/2. It participates in bacterial outer membrane biogenesis; lipopolysaccharide biosynthesis. Functionally, catalyzes the transfer of 4-deoxy-4-formamido-L-arabinose from UDP to undecaprenyl phosphate. The modified arabinose is attached to lipid A and is required for resistance to polymyxin and cationic antimicrobial peptides. The sequence is that of Undecaprenyl-phosphate 4-deoxy-4-formamido-L-arabinose transferase from Shigella flexneri serotype 5b (strain 8401).